A 730-amino-acid chain; its full sequence is Zinc finger protein 615 (730 aa).

The KRAB domain maps to 7-78 (LTLEDVAVDF…EDEIYSRICF (72 aa)). C2H2-type zinc fingers lie at residues 203–225 (HVCS…QRVH), 231–253 (HVCS…QRTH), 259–281 (YECT…QKTH), 287–309 (YTCS…QRTH), 315–337 (HGCS…QKTH), 343–365 (YICS…HRTH), 371–393 (FICN…QQTH), 399–421 (YTCS…QRTH), 427–449 (YKCN…QRTH), 455–477 (YVCT…QRTH), 483–505 (YICN…QRTH), 511–533 (YVCG…QRTH), 539–561 (YICD…RRTH), 567–589 (YVCS…QRTH), 595–617 (YICN…QQTH), 623–645 (YKCN…QRFH), 651–673 (FACT…QRIH), 679–701 (YKCS…QRKH), and 707–729 (YGCS…KRIH).

Belongs to the krueppel C2H2-type zinc-finger protein family.

The protein resides in the nucleus. May be involved in transcriptional regulation. The sequence is that of Zinc finger protein 615 (ZNF615) from Pongo abelii (Sumatran orangutan).